Reading from the N-terminus, the 584-residue chain is Optineurin (584 aa).

Positions 1–32 (MSHQPLSCLTEKGDSPCETPGNGPSNMVHPSL) are disordered. Positions 38-180 (EELLQQMKEL…VSELQLKLNS (143 aa)) form a coiled coil. An interaction with Rab8 region spans residues 58–219 (MKLNNQAMKG…TPTRTDPISL (162 aa)). The LIR motif lies at 186–191 (DSFVEI). Position 187 is a phosphoserine (Ser187). Coiled-coil stretches lie at residues 243–278 (CLRE…HSST) and 307–511 (IQVT…DIEE). Residues 267 to 295 (DFEKKANGHSSTEKQTARRADREKEDKGQ) show a composition bias toward basic and acidic residues. The segment at 267-302 (DFEKKANGHSSTEKQTARRADREKEDKGQESVGSEV) is disordered. Ser345 is subject to Phosphoserine. The tract at residues 414–584 (TKQQAEKVDK…LQIHVMDCII (171 aa)) is interaction with HD. An interaction with MYO6 region spans residues 415 to 524 (KQQAEKVDKM…RQSLMEMQCR (110 aa)). Residues 477-482 (DFHAER) carry the UBAN motif. At Ser530 the chain carries Phosphoserine. The CCHC NOA-type zinc finger occupies 554–584 (PRSIPIHSCPKCGEVLPDIDTLQIHVMDCII). Residues Cys562, Cys565, His578, and Cys582 each contribute to the Zn(2+) site.

In terms of assembly, self-associates. Interacts with HD, GTF3A, TRAF3, TBK1 and MYO6. Interacts (via UBAN) with ubiquitinated TFRC. Interacts with active GTP-bound Rab8 (RAB8A and/or RAB8B). Interacts with TBC1D17. Binds to linear ubiquitin chains. Interacts with LC3 family members MAP1LC3A, MAP1LC3B, GABARAP, GABARAPL1 and GABARAPL2; OPTN phosphorylation increases the association (at least with MAP1LC3B). Interacts with RAB12; the interaction may be indirect. Interacts with TBK1; this interaction leads to the Golgi localization of TBK1 and its subsequent activation. Interacts with palmitoyltransferase ZDHHC17/HIP14; the interaction does not lead to palmitoylation of OPTN. Interacts with CYLD. Interacts with TOM1; the interaction is indirect and is mediated by MYO6, which acts as a bridge between TOM1 and OPTN. Interacts with USP12; the interaction is independent of USP12 deubiquitinase activity and may be involved in regulation of autophagic flux. In terms of processing, phosphorylated by TBK1, leading to restrict bacterial proliferation in case of infection. As to expression, in eye, it is expressed in anterior segment, retina, and optic nerve blood vessels (at protein level). Highly expressed in adult liver, heart and testis.

The protein resides in the cytoplasm. Its subcellular location is the perinuclear region. The protein localises to the golgi apparatus. It is found in the trans-Golgi network. It localises to the cytoplasmic vesicle. The protein resides in the autophagosome. Its subcellular location is the recycling endosome. Plays an important role in the maintenance of the Golgi complex, in membrane trafficking, in exocytosis, through its interaction with myosin VI and Rab8. Links myosin VI to the Golgi complex and plays an important role in Golgi ribbon formation. Plays a role in the activation of innate immune response during viral infection. Mechanistically, recruits TBK1 at the Golgi apparatus, promoting its trans-phosphorylation after RLR or TLR3 stimulation. In turn, activated TBK1 phosphorylates its downstream partner IRF3 to produce IFN-beta. Plays a neuroprotective role in the eye and optic nerve. May act by regulating membrane trafficking and cellular morphogenesis via a complex that contains Rab8 and huntingtin (HD). Mediates the interaction of Rab8 with the probable GTPase-activating protein TBC1D17 during Rab8-mediated endocytic trafficking, such as that of transferrin receptor (TFRC/TfR); regulates Rab8 recruitment to tubules emanating from the endocytic recycling compartment. Autophagy receptor that interacts directly with both the cargo to become degraded and an autophagy modifier of the MAP1 LC3 family; targets ubiquitin-coated bacteria (xenophagy), such as cytoplasmic Salmonella enterica, and appears to function in the same pathway as SQSTM1 and CALCOCO2/NDP52. This Mus musculus (Mouse) protein is Optineurin (Optn).